Consider the following 215-residue polypeptide: MKPFTQHTGLVCPLDRVNVDTDQIIPKQFLKSIKRTGFGPNLFDEWRYLDAGQPGQDNSKRPINSDFVLNFPRYRGASVLLARDNFGCGSSREHAAWALDEYGFRTVIAPSFADIFFNNSFKNGLLPLVLNKVEVDALFAQCQVTEGYTLTVDLAAQQVITQDGTTYAFQIDTFRKHCLLNGLDDIGLTLQHAEAIRVFEAAHRIRQPWLFAPLH.

Belongs to the LeuD family. LeuD type 1 subfamily. As to quaternary structure, heterodimer of LeuC and LeuD.

It catalyses the reaction (2R,3S)-3-isopropylmalate = (2S)-2-isopropylmalate. It participates in amino-acid biosynthesis; L-leucine biosynthesis; L-leucine from 3-methyl-2-oxobutanoate: step 2/4. In terms of biological role, catalyzes the isomerization between 2-isopropylmalate and 3-isopropylmalate, via the formation of 2-isopropylmaleate. This is 3-isopropylmalate dehydratase small subunit from Xylella fastidiosa (strain 9a5c).